The chain runs to 589 residues: Probable translation initiation factor IF-2 (589 aa).

Residues 14 to 231 enclose the tr-type G domain; the sequence is LRQPIVCVLG…GLAQRFLESE (218 aa). The segment at 23–30 is G1; sequence GHVDHGKT. A GTP-binding site is contributed by 23 to 30; it reads GHVDHGKT. The G2 stretch occupies residues 48–52; that stretch reads GITQR. The G3 stretch occupies residues 84 to 87; that stretch reads DTPG. GTP-binding positions include 84 to 88 and 138 to 141; these read DTPGH and NKID. A G4 region spans residues 138–141; that stretch reads NKID. A G5 region spans residues 206 to 208; it reads SAK.

The protein belongs to the TRAFAC class translation factor GTPase superfamily. Classic translation factor GTPase family. IF-2 subfamily.

Function in general translation initiation by promoting the binding of the formylmethionine-tRNA to ribosomes. Seems to function along with eIF-2. The chain is Probable translation initiation factor IF-2 from Thermoplasma volcanium (strain ATCC 51530 / DSM 4299 / JCM 9571 / NBRC 15438 / GSS1).